Here is a 128-residue protein sequence, read N- to C-terminus: Protein Wnt-8 (128 aa).

The O-palmitoleoyl serine moiety is linked to residue Ser1. 2 cysteine pairs are disulfide-bonded: Cys71-Cys109 and Cys87-Cys102. N-linked (GlcNAc...) asparagine glycans are attached at residues Asn74 and Asn93.

Belongs to the Wnt family. Post-translationally, palmitoleoylation is required for efficient binding to frizzled receptors. Depalmitoleoylation leads to Wnt signaling pathway inhibition. Proteolytic processing by tiki1 and tiki2 promotes oxidation and formation of large disulfide-bond oligomers, leading to inactivation of wnt8.

It is found in the secreted. It localises to the extracellular space. Its subcellular location is the extracellular matrix. Ligand for members of the frizzled family of seven transmembrane receptors. Probable developmental protein. May be a signaling molecule which affects the development of discrete regions of tissues. Is likely to signal over only few cell diameters. This chain is Protein Wnt-8 (wnt8), found in Thunnus thynnus (Atlantic bluefin tuna).